A 476-amino-acid chain; its full sequence is Protein transport protein Sec61 subunit alpha (476 aa).

Over 2-33 (GIKFLEVIKPFCAVLPEIQKPERKIQFREKVL) the chain is Cytoplasmic. Residues 34-53 (WTAITLFIFLVCCQIPLFGI) form a helical membrane-spanning segment. The Lumenal segment spans residues 54 to 76 (MSSDSADPFYWMRVILASNRGTL). A helical transmembrane segment spans residues 77-96 (MELGISPIVTSGLIMQLLAG). The Cytoplasmic segment spans residues 97-117 (AKIIEVGDTPKDRALFNGAQK). The helical transmembrane segment at 118–138 (LFGMIITIGQAIVYVMTGMYG) threads the bilayer. The Lumenal segment spans residues 139–144 (DPSEMG). The chain crosses the membrane as a helical span at residues 145–165 (AGICLVIIIQLFVAGLIVLLL). The Cytoplasmic segment spans residues 166 to 172 (DELLQKG). The helical transmembrane segment at 173 to 193 (YGLGSGISLFIATNICETIVW) threads the bilayer. The Lumenal portion of the chain corresponds to 194–240 (KAFSPTTVNTGRGTEFEGAIIALFHLLATRTDKVRALREAFYRQNLP). Residues 241–261 (NLMNLIATVFVFAVVIYFQGF) form a helical membrane-spanning segment. Residues 262-288 (RVDLPIKSARYRGQYNTYPIKLFYTSN) lie on the Cytoplasmic side of the membrane. The chain crosses the membrane as a helical span at residues 289–309 (IPIILQSALVSNLYVISQMLS). The Lumenal segment spans residues 310–354 (TRFSGNFLVNLLGTWSDTSTGGPARAYPVGGLCYYFSPPESFGSV). A helical transmembrane segment spans residues 355-375 (LDDPVHASIYIVFMLGSCAFF). Topologically, residues 376–420 (SKTWIEVSGSSAKDVAKQLKEQQMVMRGHRETSMVHELNRYIPTA) are cytoplasmic. Residues 421–441 (AAFGGLCIGGLSVMADFLGAI) traverse the membrane as a helical segment. Topologically, residues 442–445 (GSGT) are lumenal. Residues 446-462 (GILLAVTIIYQYFEIFV) form a helical membrane-spanning segment. Over 463-476 (KEQSEMGSMGALLF) the chain is Cytoplasmic.

Belongs to the SecY/SEC61-alpha family. In terms of assembly, the SEC61 channel-forming translocon complex consists of channel-forming core components SEC61A1, SEC61B and SEC61G and different auxiliary components such as SEC62 and SEC63. The SEC61 channel associates with the multi-pass translocon (MPT) complex.

Its subcellular location is the endoplasmic reticulum membrane. Component of SEC61 channel-forming translocon complex that mediates transport of signal peptide-containing precursor polypeptides across the endoplasmic reticulum (ER). Forms a ribosome receptor and a gated pore in the ER membrane, both functions required for cotranslational translocation of nascent polypeptides. May cooperate with auxiliary protein SEC62, SEC63 and HSPA5/BiP to enable post-translational transport of small presecretory proteins. The SEC61 channel is also involved in ER membrane insertion of transmembrane proteins: it mediates membrane insertion of the first few transmembrane segments of proteins, while insertion of subsequent transmembrane regions of multi-pass membrane proteins is mediated by the multi-pass translocon (MPT) complex. This Gadus ogac (Greenland cod) protein is Protein transport protein Sec61 subunit alpha (sec61a).